A 775-amino-acid polypeptide reads, in one-letter code: Glutamine--tRNA ligase (775 aa).

N-acetylalanine is present on Ala-2. At Ser-70 the chain carries Phosphoserine. ATP-binding positions include 271-273 (EPN) and 277-283 (HIGHAKA). Residue Asp-303 participates in L-glutamine binding. At Lys-309 the chain carries N6-acetyllysine. Tyr-438 is a binding site for L-glutamine. Residues Thr-457, 486-487 (RL), and 494-496 (VSK) each bind ATP. Ser-495 carries the phosphoserine modification.

It belongs to the class-I aminoacyl-tRNA synthetase family. In terms of assembly, monomer. Part of a multisubunit complex that groups tRNA ligases for Arg (RARS1), Asp (DARS1), Gln (QARS1), Ile (IARS1), Leu (LARS1), Lys (KARS1), Met (MARS1) the bifunctional ligase for Glu and Pro (EPRS1) and the auxiliary subunits AIMP1/p43, AIMP2/p38 and EEF1E1/p18. Interacts with RARS1. Part of a complex composed of RARS1, QARS1 and AIMP1.

The protein resides in the cytoplasm. Its subcellular location is the cytosol. It carries out the reaction tRNA(Gln) + L-glutamine + ATP = L-glutaminyl-tRNA(Gln) + AMP + diphosphate. Functionally, glutamine--tRNA ligase. Plays a critical role in brain development. The protein is Glutamine--tRNA ligase (Qars1) of Mus musculus (Mouse).